Here is a 124-residue protein sequence, read N- to C-terminus: Small ribosomal subunit protein uS12c (124 aa).

Disordered regions lie at residues M1–P28 and A104–T124. Basic residues-rich tracts occupy residues E11–K20 and D109–T124.

It belongs to the universal ribosomal protein uS12 family. As to quaternary structure, part of the 30S ribosomal subunit.

It is found in the plastid. Its subcellular location is the chloroplast. In terms of biological role, with S4 and S5 plays an important role in translational accuracy. Located at the interface of the 30S and 50S subunits. The sequence is that of Small ribosomal subunit protein uS12c (rps12) from Gracilaria tenuistipitata var. liui (Red alga).